Consider the following 81-residue polypeptide: RNA-binding protein Hfq (81 aa).

One can recognise a Sm domain in the interval 10–69 (DPFLNTLRKEHVPVSIYLVNGIKLQGQVDSFDQYVILLKNTVTQMVYKHAISTIVPGRAV).

It belongs to the Hfq family. Homohexamer.

RNA chaperone that binds small regulatory RNA (sRNAs) and mRNAs to facilitate mRNA translational regulation in response to envelope stress, environmental stress and changes in metabolite concentrations. Also binds with high specificity to tRNAs. The protein is RNA-binding protein Hfq of Methylobacillus flagellatus (strain ATCC 51484 / DSM 6875 / VKM B-1610 / KT).